A 157-amino-acid polypeptide reads, in one-letter code: Protein Smg homolog (157 aa).

It belongs to the Smg family.

The sequence is that of Protein Smg homolog from Xanthomonas campestris pv. campestris (strain 8004).